The sequence spans 447 residues: Gastrin/cholecystokinin type B receptor (447 aa).

Residues Met1–Arg57 lie on the Extracellular side of the membrane. N-linked (GlcNAc...) asparagine glycosylation is found at Asn7, Asn30, and Asn36. Residues Ile58–Leu79 traverse the membrane as a helical segment. The Cytoplasmic segment spans residues Gly80 to Thr87. Residues Val88–Pro109 traverse the membrane as a helical segment. Residues Phe110–Ser131 are Extracellular-facing. Cysteines 127 and 205 form a disulfide. The chain crosses the membrane as a helical span at residues Tyr132–Leu150. The Cytoplasmic segment spans residues Glu151–His170. The helical transmembrane segment at Ala171 to Tyr189 threads the bilayer. Topologically, residues Pro190–Ser219 are extracellular. The chain crosses the membrane as a helical span at residues Val220–Ser242. The Cytoplasmic segment spans residues Arg243–Arg333. The segment at Asp258–Ala285 is disordered. The helical transmembrane segment at Met334–Trp355 threads the bilayer. Topologically, residues Arg356–Ser373 are extracellular. The chain crosses the membrane as a helical span at residues Phe374–His394. Residues Arg395–Gly447 are Cytoplasmic-facing. Cys408 is lipidated: S-palmitoyl cysteine.

This sequence belongs to the G-protein coupled receptor 1 family. As to expression, isoform 1 is expressed in brain, pancreas, stomach, the colon cancer cell line LoVo and the T-lymphoblastoma Jurkat, but not in heart, placenta, liver, lung, skeletal muscle, kidney or the stomach cancer cell line AGS. Expressed at high levels in the small cell lung cancer cell line NCI-H510, at lower levels in NCI-H345, NCI-H69 and GLC-28 cell lines, not expressed in GLC-19 cell line. Within the stomach, expressed at high levels in the mucosa of the gastric fundus and at low levels in the antrum and duodenum. Isoform 2 is present in pancreatic cancer cells and colorectal cancer cells, but not in normal pancreas or colonic mucosa. Isoform 3 is expressed in brain, pancreas, stomach, the stomach cancer cell line AGS and the colon cancer cell line LoVo.

The protein resides in the cell membrane. In terms of biological role, receptor for gastrin and cholecystokinin. The CCK-B receptors occur throughout the central nervous system where they modulate anxiety, analgesia, arousal, and neuroleptic activity. This receptor mediates its action by association with G proteins that activate a phosphatidylinositol-calcium second messenger system. Isoform 2 is constitutively activated and may regulate cancer cell proliferation via a gastrin-independent mechanism. The protein is Gastrin/cholecystokinin type B receptor of Homo sapiens (Human).